Consider the following 734-residue polypeptide: Photosystem I P700 chlorophyll a apoprotein A2 (734 aa).

Helical transmembrane passes span 46-69 (IFAS…FHVA), 135-158 (LYTG…LHLQ), 175-199 (LNHH…HVAI), 273-291 (MAHH…GHMY), 330-353 (IHFQ…QHMY), 369-395 (AALY…IFFI), 417-439 (AIIS…LYVH), and 517-535 (FLVH…LILV). Residues Cys-559 and Cys-568 each coordinate [4Fe-4S] cluster. Transmembrane regions (helical) follow at residues 575–596 (AFYL…YWHW) and 643–665 (LSVW…MFLI). 3 residues coordinate chlorophyll a: His-654, Met-662, and Tyr-670. Trp-671 contacts phylloquinone. The helical transmembrane segment at 707-727 (LVGLAHFSVGYIFTYAAFLIA) threads the bilayer.

The protein belongs to the PsaA/PsaB family. In terms of assembly, the PsaA/B heterodimer binds the P700 chlorophyll special pair and subsequent electron acceptors. PSI consists of a core antenna complex that captures photons, and an electron transfer chain that converts photonic excitation into a charge separation. The eukaryotic PSI reaction center is composed of at least 11 subunits. Requires P700 is a chlorophyll a/chlorophyll a' dimer, A0 is one or more chlorophyll a, A1 is one or both phylloquinones and FX is a shared 4Fe-4S iron-sulfur center. as cofactor.

It is found in the plastid. It localises to the chloroplast thylakoid membrane. The enzyme catalyses reduced [plastocyanin] + hnu + oxidized [2Fe-2S]-[ferredoxin] = oxidized [plastocyanin] + reduced [2Fe-2S]-[ferredoxin]. In terms of biological role, psaA and PsaB bind P700, the primary electron donor of photosystem I (PSI), as well as the electron acceptors A0, A1 and FX. PSI is a plastocyanin-ferredoxin oxidoreductase, converting photonic excitation into a charge separation, which transfers an electron from the donor P700 chlorophyll pair to the spectroscopically characterized acceptors A0, A1, FX, FA and FB in turn. Oxidized P700 is reduced on the lumenal side of the thylakoid membrane by plastocyanin. The protein is Photosystem I P700 chlorophyll a apoprotein A2 of Capsella bursa-pastoris (Shepherd's purse).